The following is a 157-amino-acid chain: Arginine repressor (157 aa).

Belongs to the ArgR family.

It is found in the cytoplasm. The protein operates within amino-acid biosynthesis; L-arginine biosynthesis [regulation]. Regulates arginine biosynthesis genes. This is Arginine repressor from Bacteroides thetaiotaomicron (strain ATCC 29148 / DSM 2079 / JCM 5827 / CCUG 10774 / NCTC 10582 / VPI-5482 / E50).